Reading from the N-terminus, the 602-residue chain is RecBCD enzyme subunit RecD (602 aa).

An ATP-binding site is contributed by 174 to 181; the sequence is GGPGTGKT.

The protein belongs to the RecD family. As to quaternary structure, heterotrimer of RecB, RecC and RecD. All subunits contribute to DNA-binding.

It carries out the reaction Couples ATP hydrolysis with the unwinding of duplex DNA at the replication fork by translocating in the 5'-3' direction. This creates two antiparallel DNA single strands (ssDNA). The leading ssDNA polymer is the template for DNA polymerase III holoenzyme which synthesizes a continuous strand.. The enzyme catalyses ATP + H2O = ADP + phosphate + H(+). A helicase/nuclease that prepares dsDNA breaks (DSB) for recombinational DNA repair. Binds to DSBs and unwinds DNA via a highly rapid and processive ATP-dependent bidirectional helicase activity. Unwinds dsDNA until it encounters a Chi (crossover hotspot instigator) sequence from the 3' direction. Cuts ssDNA a few nucleotides 3' to the Chi site. The properties and activities of the enzyme are changed at Chi. The Chi-altered holoenzyme produces a long 3'-ssDNA overhang and facilitates RecA-binding to the ssDNA for homologous DNA recombination and repair. Holoenzyme degrades any linearized DNA that is unable to undergo homologous recombination. In the holoenzyme this subunit has ssDNA-dependent ATPase and 5'-3' helicase activity. When added to pre-assembled RecBC greatly stimulates nuclease activity and augments holoenzyme processivity. Negatively regulates the RecA-loading ability of RecBCD. The polypeptide is RecBCD enzyme subunit RecD (Buchnera aphidicola subsp. Schizaphis graminum (strain Sg)).